A 284-amino-acid chain; its full sequence is Bifunctional protein FolD (284 aa).

Residues 165-167 (GRG), T192, and V233 each bind NADP(+).

This sequence belongs to the tetrahydrofolate dehydrogenase/cyclohydrolase family. Homodimer.

The enzyme catalyses (6R)-5,10-methylene-5,6,7,8-tetrahydrofolate + NADP(+) = (6R)-5,10-methenyltetrahydrofolate + NADPH. It catalyses the reaction (6R)-5,10-methenyltetrahydrofolate + H2O = (6R)-10-formyltetrahydrofolate + H(+). The protein operates within one-carbon metabolism; tetrahydrofolate interconversion. Functionally, catalyzes the oxidation of 5,10-methylenetetrahydrofolate to 5,10-methenyltetrahydrofolate and then the hydrolysis of 5,10-methenyltetrahydrofolate to 10-formyltetrahydrofolate. The protein is Bifunctional protein FolD of Corynebacterium efficiens (strain DSM 44549 / YS-314 / AJ 12310 / JCM 11189 / NBRC 100395).